The following is a 234-amino-acid chain: ATP synthase subunit a 2 (234 aa).

The next 6 membrane-spanning stretches (helical) occupy residues 29 to 49, 90 to 110, 116 to 136, 147 to 167, 186 to 206, and 207 to 227; these read FFQH…VGLL, LIAT…IPGF, SLNT…IVGV, FMGP…IGHL, IVLM…MMLM, and GILV…IYIA.

It belongs to the ATPase A chain family. In terms of assembly, F-type ATPases have 2 components, CF(1) - the catalytic core - and CF(0) - the membrane proton channel. CF(1) has five subunits: alpha(3), beta(3), gamma(1), delta(1), epsilon(1). CF(0) has three main subunits: a(1), b(2) and c(9-12). The alpha and beta chains form an alternating ring which encloses part of the gamma chain. CF(1) is attached to CF(0) by a central stalk formed by the gamma and epsilon chains, while a peripheral stalk is formed by the delta and b chains.

It is found in the cell inner membrane. Its function is as follows. Key component of the proton channel; it plays a direct role in the translocation of protons across the membrane. This Syntrophotalea carbinolica (strain DSM 2380 / NBRC 103641 / GraBd1) (Pelobacter carbinolicus) protein is ATP synthase subunit a 2.